Consider the following 197-residue polypeptide: SIGLEC family-like protein 1 (197 aa).

The chain crosses the membrane as a helical span at residues 118–138 (GAIYAGIVIALLFLCLLPLIV). The tract at residues 160–179 (VRASQELEMSLKPEEPGKPV) is disordered. The span at 162-176 (ASQELEMSLKPEEPG) shows a compositional bias: basic and acidic residues.

The protein localises to the membrane. The chain is SIGLEC family-like protein 1 (SIGLECL1) from Homo sapiens (Human).